The following is a 156-amino-acid chain: Gamma-L-glutamyl-butirosin B gamma-glutamyl cyclotransferase (156 aa).

Residue 24–27 (YGTL) coordinates substrate. Glutamate 89 serves as the catalytic Proton acceptor.

This sequence belongs to the gamma-glutamylcyclotransferase family.

It carries out the reaction gamma-L-glutamyl-butirosin B = butirosin B + 5-oxo-L-proline. It participates in antibiotic biosynthesis; butirosin biosynthesis. Functionally, cyclotransferase that catalyzes the last step in the biosynthesis of the aminoglycoside antibiotic butirosin B. Cleaves the amide bond via transamidation using the alpha-amine of the terminal gamma-L-glutamate of the side chain, releasing it as the cyclic 5-oxoproline. This Niallia circulans (Bacillus circulans) protein is Gamma-L-glutamyl-butirosin B gamma-glutamyl cyclotransferase (btrG).